The chain runs to 828 residues: Transcription factor SOX-6 (828 aa).

The disordered stretch occupies residues 1–51 (MSSKQATSPFACAADGEDAMTQDLTSREKEEGSDQHVASHLPLHPIMHNKP). A compositionally biased stretch (basic and acidic residues) spans 25–34 (TSREKEEGSD). Thr119 carries the post-translational modification Phosphothreonine. Positions 184 to 262 (LAEKERQLST…LLQQQIQVQG (79 aa)) form a coiled coil. The tract at residues 380–470 (SPGAKMPSTP…KSSIPSPIGG (91 aa)) is disordered. Residues 393–402 (NTAGTVSPTG) are compositionally biased toward polar residues. A Phosphoserine modification is found at Ser399. Thr401 bears the Phosphothreonine mark. Glycyl lysine isopeptide (Lys-Gly) (interchain with G-Cter in SUMO) cross-links involve residues Lys404 and Lys417. Ser439 and Ser442 each carry phosphoserine. Positions 439–461 (SPTSPTQNLFPASKTSPVNLPNK) are enriched in polar residues. The HMG box DNA-binding region spans 621 to 689 (IKRPMNAFMV…IHLEKYPNYK (69 aa)). A compositionally biased stretch (polar residues) spans 753–781 (TPSPQMTSDCSSTSASPEPSLPVIQSTYG). Positions 753 to 828 (TPSPQMTSDC…NEAPEAVSAN (76 aa)) are disordered. Over residues 796-809 (NGEDEMEMYDDYED) the composition is skewed to acidic residues.

In terms of assembly, homodimer. Interacts with DAZAP2. May interact with CENPK. In terms of processing, sumoylation inhibits the transcriptional activity. In terms of tissue distribution, expressed in a wide variety of tissues, most abundantly in skeletal musclen.

It localises to the nucleus. Its subcellular location is the cytoplasm. Functionally, transcription factor that plays a key role in several developmental processes, including neurogenesis, chondrocytes differentiation and cartilage formation. Specifically binds the 5'-AACAAT-3' DNA motif present in enhancers and super-enhancers and promotes expression of genes important for chondrogenesis. Required for overt chondrogenesis when condensed prechondrocytes differentiate into early stage chondrocytes: SOX5 and SOX6 cooperatively bind with SOX9 on active enhancers and super-enhancers associated with cartilage-specific genes, and thereby potentiate SOX9's ability to transactivate. Not involved in precartilaginous condensation, the first step in chondrogenesis, during which skeletal progenitors differentiate into prechondrocytes. Together with SOX5, required to form and maintain a pool of highly proliferating chondroblasts between epiphyses and metaphyses, to form columnar chondroblasts, delay chondrocyte prehypertrophy but promote hypertrophy, and to delay terminal differentiation of chondrocytes on contact with ossification fronts. Binds to the proximal promoter region of the myelin protein MPZ gene, and is thereby involved in the differentiation of oligodendroglia in the developing spinal tube. Binds to the gene promoter of MBP and acts as a transcriptional repressor. This chain is Transcription factor SOX-6, found in Homo sapiens (Human).